Reading from the N-terminus, the 182-residue chain is Interferon beta (182 aa).

The N-terminal stretch at 1 to 21 is a signal peptide; sequence MNNRWILHAAFLLCFSTTALS. The residue at position 24 (tyrosine 24) is a Phosphotyrosine. N-linked (GlcNAc...) asparagine glycans are attached at residues asparagine 50, asparagine 90, and asparagine 97.

The protein belongs to the alpha/beta interferon family. Monomer. Post-translationally, this beta interferon does not have a disulfide bond.

The protein localises to the secreted. In terms of biological role, type I interferon cytokine that plays a key role in the innate immune response to infection, developing tumors and other inflammatory stimuli. Signals via binding to high-affinity (IFNAR2) and low-affinity (IFNAR1) heterodimeric receptor, activating the canonical Jak-STAT signaling pathway resulting in transcriptional activation or repression of interferon-regulated genes that encode the effectors of the interferon response, such as antiviral proteins, regulators of cell proliferation and differentiation, and immunoregulatory proteins. Signals mostly via binding to a IFNAR1-IFNAR2 heterodimeric receptor, but can also function with IFNAR1 alone and independently of Jak-STAT pathways. Elicits a wide variety of responses, including antiviral and antibacterial activities, and can regulate the development of B-cells, myelopoiesis and lipopolysaccharide (LPS)-inducible production of tumor necrosis factor. Plays a role in neuronal homeostasis by regulating dopamine turnover and protecting dopaminergic neurons: acts by promoting neuronal autophagy and alpha-synuclein clearance, thereby preventing dopaminergic neuron loss. IFNB1 is more potent than interferon-alpha (IFN-alpha) in inducing the apoptotic and antiproliferative pathways required for control of tumor cell growth. The polypeptide is Interferon beta (Mus musculus (Mouse)).